The chain runs to 341 residues: Beta-hexosaminidase (341 aa).

Substrate is bound by residues Asp61, Arg69, Arg134, and 164-165 (KH). The active-site Proton donor/acceptor is the His177. Asp249 serves as the catalytic Nucleophile.

This sequence belongs to the glycosyl hydrolase 3 family. NagZ subfamily.

The protein resides in the cytoplasm. The catalysed reaction is Hydrolysis of terminal non-reducing N-acetyl-D-hexosamine residues in N-acetyl-beta-D-hexosaminides.. The protein operates within cell wall biogenesis; peptidoglycan recycling. Functionally, plays a role in peptidoglycan recycling by cleaving the terminal beta-1,4-linked N-acetylglucosamine (GlcNAc) from peptide-linked peptidoglycan fragments, giving rise to free GlcNAc, anhydro-N-acetylmuramic acid and anhydro-N-acetylmuramic acid-linked peptides. The chain is Beta-hexosaminidase from Shewanella frigidimarina (strain NCIMB 400).